The following is a 192-amino-acid chain: Endoribonuclease YbeY (192 aa).

Positions 109, 113, and 119 each coordinate Zn(2+). Positions 142–192 (VGAALREGGPARAAETETSWTRSPTSTSTRSPSGSTARGTRARSSRAGSGR) are disordered. Over residues 159–180 (TSWTRSPTSTSTRSPSGSTARG) the composition is skewed to low complexity.

The protein belongs to the endoribonuclease YbeY family. Zn(2+) serves as cofactor.

It is found in the cytoplasm. Single strand-specific metallo-endoribonuclease involved in late-stage 70S ribosome quality control and in maturation of the 3' terminus of the 16S rRNA. This is Endoribonuclease YbeY from Anaeromyxobacter sp. (strain Fw109-5).